The following is a 103-amino-acid chain: Ig lambda chain C region (103 aa).

Residues 6–99 form the Ig-like domain; the sequence is PTITLFPPSK…NGTSITKTLK (94 aa). A disulfide bridge links Cys-28 with Cys-85.

This is Ig lambda chain C region from Gallus gallus (Chicken).